The following is a 193-amino-acid chain: dCTP deaminase, dUMP-forming (193 aa).

Residues 107–112, Asp125, 133–135, Gln154, and Tyr168 each bind dCTP; these read RSSLGR and TLE. The active-site Proton donor/acceptor is the Glu135. The segment at 169–193 is disordered; sequence AESSGKYHGDERPSPSKMHLDFCRG. Basic and acidic residues predominate over residues 173–193; sequence GKYHGDERPSPSKMHLDFCRG.

Belongs to the dCTP deaminase family. As to quaternary structure, homotrimer.

The catalysed reaction is dCTP + 2 H2O = dUMP + NH4(+) + diphosphate. It participates in pyrimidine metabolism; dUMP biosynthesis; dUMP from dCTP: step 1/1. Functionally, bifunctional enzyme that catalyzes both the deamination of dCTP to dUTP and the hydrolysis of dUTP to dUMP without releasing the toxic dUTP intermediate. This is dCTP deaminase, dUMP-forming from Methanopyrus kandleri (strain AV19 / DSM 6324 / JCM 9639 / NBRC 100938).